The primary structure comprises 720 residues: Engulfment and cell motility protein 2 (720 aa).

Tyr48 carries the phosphotyrosine modification. An ELMO domain is found at 311–485; the sequence is AQRDIIFELR…VVREQITRAL (175 aa). The residue at position 503 (Ser503) is a Phosphoserine. The 122-residue stretch at 553–674 folds into the PH domain; it reads SSFRKIGNRR…LLGKDMSSEL (122 aa). An SH3-binding motif is present at residues 700–707; sequence PEAPPPIP. Tyr717 is modified (phosphotyrosine).

As to quaternary structure, interacts with the SH3-domain of DOCK1 via its SH3-binding site. Probably part of a complex with DOCK1 and RAC1. Probably part of a complex with DOCK1 and CRK isoform CRK-II. Interacts with ARHGEF16, DOCK4 and EPHA2; mediates activation of RAC1 by EPHA2. Interacts with ADGRB3. Interacts with AUTS2; the interaction is direct. As to expression, widely expressed, with a higher expression in skeletal muscle, kidney and placenta.

Its subcellular location is the cytoplasm. The protein localises to the cytosol. It localises to the membrane. Involved in cytoskeletal rearrangements required for phagocytosis of apoptotic cells and cell motility. Acts in association with DOCK1 and CRK. Was initially proposed to be required in complex with DOCK1 to activate Rac Rho small GTPases. May enhance the guanine nucleotide exchange factor (GEF) activity of DOCK1. This Homo sapiens (Human) protein is Engulfment and cell motility protein 2 (ELMO2).